A 55-amino-acid chain; its full sequence is Preprotein translocase subunit SecG (55 aa).

Topologically, residues 1 to 31 (MPKNNTNENFQSGAGLIRYFNEEEIKGPALD) are cytoplasmic. Residues 32–51 (PKLIIYIGIAMAVIVELAKI) traverse the membrane as a helical segment. Over 52–55 (FWPV) the chain is Extracellular.

This sequence belongs to the SEC61-beta family. Component of the protein translocase complex. Heterotrimer consisting of alpha (SecY), beta (SecG) and gamma (SecE) subunits. Can form oligomers of the heterotrimer.

The protein resides in the cell membrane. Functionally, involved in protein export. The function of the beta subunit is unknown, but it may be involved in stabilization of the trimeric complex. The chain is Preprotein translocase subunit SecG from Picrophilus torridus (strain ATCC 700027 / DSM 9790 / JCM 10055 / NBRC 100828 / KAW 2/3).